The primary structure comprises 64 residues: SPbeta prophage-derived uncharacterized protein YonP (64 aa).

This chain is SPbeta prophage-derived uncharacterized protein YonP (yonP), found in Bacillus subtilis (strain 168).